The following is a 292-amino-acid chain: Cyclin-dependent kinase 5 (292 aa).

In terms of domain architecture, Protein kinase spans 4-286; it reads YEKLEKIGEG…AEEALQHPYF (283 aa). Residues 10–18 and K33 each bind ATP; that span reads IGEGTYGTV. Y15 is modified (phosphotyrosine; by ABL1, EPHA4 and FYN). T17 is subject to Phosphothreonine. K56 carries the post-translational modification N6-acetyllysine. S72 is subject to Phosphoserine. D126 functions as the Proton acceptor in the catalytic mechanism. Position 159 is a phosphoserine (S159).

It belongs to the protein kinase superfamily. CMGC Ser/Thr protein kinase family. CDC2/CDKX subfamily. As to quaternary structure, heterodimer composed of a catalytic subunit CDK5 and a regulatory subunit CDK5R1 (p25) and macromolecular complex composed of at least CDK5, CDK5R1 (p35) and CDK5RAP1 or CDK5RAP2 or CDK5RAP3. Only the heterodimer shows kinase activity. Under neurotoxic stress and neuronal injury conditions, p35 is cleaved by calpain to generate p25 that hyperactivates CDK5, that becomes functionally disabled and often toxic. Found in a trimolecular complex with CABLES1 and ABL1. Interacts with CABLES1 and CABLES2. Interacts with AATK and GSTP1. Binds to HDAC1 when in complex with p25. Interaction with myristoylation p35 promotes CDK5 association with membranes. Both isoforms 1 and 2 interacts with beta-catenin/CTNNB1. Interacts with delta-catenin/CTNND2 and APEX1. Interacts with P53/TP53 in neurons. Interacts with EPHA4; may mediate the activation of NGEF by EPHA4. Interacts with PTK2/FAK1. The complex p35/CDK5 interacts with CLOCK. Phosphorylation on Tyr-15 by ABL1 and FYN, and on Ser-159 by casein kinase 1 promotes kinase activity. By contrast, phosphorylation at Thr-14 inhibits activity. Post-translationally, phosphorylation at Ser-159 is essential for maximal catalytic activity.

The protein localises to the nucleus. It is found in the cytoplasm. It localises to the cell membrane. Its subcellular location is the perikaryon. The protein resides in the cell projection. The protein localises to the lamellipodium. It is found in the growth cone. It localises to the postsynaptic density. Its subcellular location is the synapse. It catalyses the reaction L-seryl-[protein] + ATP = O-phospho-L-seryl-[protein] + ADP + H(+). It carries out the reaction L-threonyl-[protein] + ATP = O-phospho-L-threonyl-[protein] + ADP + H(+). Inhibited by 2-(1-ethyl-2-hydroxyethylamino)-6-benzylamino-9-isopropylpurine (roscovitine), 1-isopropyl-4-aminobenzyl-6-ether-linked benzimidazoles, resveratrol, AT-7519 and olomoucine. Activated by CDK5R1 (p35) and CDK5R2 (p39) during the development of the nervous system; degradation of CDK5R1 (p35) and CDK5R2 (p39) by proteasome result in down regulation of kinase activity, during this process, CDK5 phosphorylates p35 and induces its ubiquitination and subsequent degradation. Kinase activity is mainly determined by the amount of p35 available and subcellular location; reversible association to plasma membrane inhibits activity. Long-term inactivation as well as CDK5R1 (p25)-mediated hyperactivation of CDK5 triggers cell death. The pro-death activity of hyperactivated CDK5 is suppressed by membrane association of CDK5, via myristoylation of p35. Brain-derived neurotrophic factor, glial-derived neurotrophic factor, nerve growth factor (NGF), retinoic acid, laminin and neuregulin promote activity. Neurotoxicity enhances nuclear activity, thus leading to MEF2 phosphorylation and inhibition prior to apoptosis of cortical neurons. Repression by GSTP1 via p25/p35 translocation prevents neurodegeneration. In terms of biological role, proline-directed serine/threonine-protein kinase essential for neuronal cell cycle arrest and differentiation and may be involved in apoptotic cell death in neuronal diseases by triggering abortive cell cycle re-entry. Interacts with D1 and D3-type G1 cyclins. Phosphorylates SRC, NOS3, VIM/vimentin, p35/CDK5R1, MEF2A, SIPA1L1, SH3GLB1, PXN, PAK1, MCAM/MUC18, SEPT5, SYN1, DNM1, AMPH, SYNJ1, CDK16, RAC1, RHOA, CDC42, TONEBP/NFAT5, MAPT/TAU, MAP1B, histone H1, p53/TP53, HDAC1, APEX1, PTK2/FAK1, huntingtin/HTT, ATM, MAP2, NEFH and NEFM. Regulates several neuronal development and physiological processes including neuronal survival, migration and differentiation, axonal and neurite growth, synaptogenesis, oligodendrocyte differentiation, synaptic plasticity and neurotransmission, by phosphorylating key proteins. Negatively regulates the CACNA1B/CAV2.2 -mediated Ca(2+) release probability at hippocampal neuronal soma and synaptic terminals. Activated by interaction with CDK5R1 (p35) and CDK5R2 (p39), especially in postmitotic neurons, and promotes CDK5R1 (p35) expression in an autostimulation loop. Phosphorylates many downstream substrates such as Rho and Ras family small GTPases (e.g. PAK1, RAC1, RHOA, CDC42) or microtubule-binding proteins (e.g. MAPT/TAU, MAP2, MAP1B), and modulates actin dynamics to regulate neurite growth and/or spine morphogenesis. Also phosphorylates exocytosis associated proteins such as MCAM/MUC18, SEPT5, SYN1, and CDK16/PCTAIRE1 as well as endocytosis associated proteins such as DNM1, AMPH and SYNJ1 at synaptic terminals. In the mature central nervous system (CNS), regulates neurotransmitter movements by phosphorylating substrates associated with neurotransmitter release and synapse plasticity; synaptic vesicle exocytosis, vesicles fusion with the presynaptic membrane, and endocytosis. Promotes cell survival by activating anti-apoptotic proteins BCL2 and STAT3, and negatively regulating of JNK3/MAPK10 activity. Phosphorylation of p53/TP53 in response to genotoxic and oxidative stresses enhances its stabilization by preventing ubiquitin ligase-mediated proteasomal degradation, and induces transactivation of p53/TP53 target genes, thus regulating apoptosis. Phosphorylation of p35/CDK5R1 enhances its stabilization by preventing calpain-mediated proteolysis producing p25/CDK5R1 and avoiding ubiquitin ligase-mediated proteasomal degradation. During aberrant cell-cycle activity and DNA damage, p25/CDK5 activity elicits cell-cycle activity and double-strand DNA breaks that precedes neuronal death by deregulating HDAC1. DNA damage triggered phosphorylation of huntingtin/HTT in nuclei of neurons protects neurons against polyglutamine expansion as well as DNA damage mediated toxicity. Phosphorylation of PXN reduces its interaction with PTK2/FAK1 in matrix-cell focal adhesions (MCFA) during oligodendrocytes (OLs) differentiation. Negative regulator of Wnt/beta-catenin signaling pathway. Activator of the GAIT (IFN-gamma-activated inhibitor of translation) pathway, which suppresses expression of a post-transcriptional regulon of proinflammatory genes in myeloid cells; phosphorylates the linker domain of glutamyl-prolyl tRNA synthetase (EPRS) in a IFN-gamma-dependent manner, the initial event in assembly of the GAIT complex. Phosphorylation of SH3GLB1 is required for autophagy induction in starved neurons. Phosphorylation of TONEBP/NFAT5 in response to osmotic stress mediates its rapid nuclear localization. MEF2 is inactivated by phosphorylation in nucleus in response to neurotoxin, thus leading to neuronal apoptosis. APEX1 AP-endodeoxyribonuclease is repressed by phosphorylation, resulting in accumulation of DNA damage and contributing to neuronal death. NOS3 phosphorylation down regulates NOS3-derived nitrite (NO) levels. SRC phosphorylation mediates its ubiquitin-dependent degradation and thus leads to cytoskeletal reorganization. May regulate endothelial cell migration and angiogenesis via the modulation of lamellipodia formation. Involved in dendritic spine morphogenesis by mediating the EFNA1-EPHA4 signaling. The complex p35/CDK5 participates in the regulation of the circadian clock by modulating the function of CLOCK protein: phosphorylates CLOCK at 'Thr-451' and 'Thr-461' and regulates the transcriptional activity of the CLOCK-BMAL1 heterodimer in association with altered stability and subcellular distribution. The sequence is that of Cyclin-dependent kinase 5 from Bos taurus (Bovine).